Consider the following 486-residue polypeptide: tRNA sulfurtransferase (486 aa).

The 105-residue stretch at 63 to 167 (DAFAERLGCI…HEKLYMVVRR (105 aa)) folds into the THUMP domain. Residues 185–186 (LI), Lys-267, Gly-289, and Gln-298 each bind ATP. Cys-346 and Cys-460 are disulfide-bonded. In terms of domain architecture, Rhodanese spans 408–486 (VDTQEVVIDI…GYTNVKVYRP (79 aa)). Cys-460 (cysteine persulfide intermediate) is an active-site residue.

It belongs to the ThiI family.

It is found in the cytoplasm. It carries out the reaction [ThiI sulfur-carrier protein]-S-sulfanyl-L-cysteine + a uridine in tRNA + 2 reduced [2Fe-2S]-[ferredoxin] + ATP + H(+) = [ThiI sulfur-carrier protein]-L-cysteine + a 4-thiouridine in tRNA + 2 oxidized [2Fe-2S]-[ferredoxin] + AMP + diphosphate. The enzyme catalyses [ThiS sulfur-carrier protein]-C-terminal Gly-Gly-AMP + S-sulfanyl-L-cysteinyl-[cysteine desulfurase] + AH2 = [ThiS sulfur-carrier protein]-C-terminal-Gly-aminoethanethioate + L-cysteinyl-[cysteine desulfurase] + A + AMP + 2 H(+). Its pathway is cofactor biosynthesis; thiamine diphosphate biosynthesis. Catalyzes the ATP-dependent transfer of a sulfur to tRNA to produce 4-thiouridine in position 8 of tRNAs, which functions as a near-UV photosensor. Also catalyzes the transfer of sulfur to the sulfur carrier protein ThiS, forming ThiS-thiocarboxylate. This is a step in the synthesis of thiazole, in the thiamine biosynthesis pathway. The sulfur is donated as persulfide by IscS. The polypeptide is tRNA sulfurtransferase (Shewanella denitrificans (strain OS217 / ATCC BAA-1090 / DSM 15013)).